Consider the following 322-residue polypeptide: Prephenate dehydratase (322 aa).

Residues R5–M191 enclose the Prephenate dehydratase domain. Residues S205–P282 form the ACT domain. The segment at A286 to L322 is disordered.

Homodimer.

The enzyme catalyses prephenate + H(+) = 3-phenylpyruvate + CO2 + H2O. It participates in amino-acid biosynthesis; L-phenylalanine biosynthesis; phenylpyruvate from prephenate: step 1/1. In Mycobacterium leprae (strain Br4923), this protein is Prephenate dehydratase (pheA).